A 261-amino-acid polypeptide reads, in one-letter code: Cytochrome c oxidase subunit 3 (261 aa).

Topologically, residues 1-15 (MTHQTHAYHMVNPSP) are mitochondrial matrix. The helical transmembrane segment at 16–34 (WPLTGALSALLMTSGLIMW) threads the bilayer. Residues 35-40 (FHFNSM) are Mitochondrial intermembrane-facing. The chain crosses the membrane as a helical span at residues 41–66 (YLLMLGLTTNTLTMYQWWRDIVREST). At 67 to 72 (FQGHHT) the chain is on the mitochondrial matrix side. The chain crosses the membrane as a helical span at residues 73-105 (PIVQKGLRYGMILFIVSEVFFFAGFFWAFYHSS). The Mitochondrial intermembrane portion of the chain corresponds to 106 to 128 (LAPTPELGGCWPPTGITPLNPME). A helical membrane pass occupies residues 129 to 152 (VPLLNTSVLLASGVSITWAHHSLM). Residues 153 to 155 (EGN) lie on the Mitochondrial matrix side of the membrane. Residues 156 to 183 (RKHMLQALFITISLGVYFTLLQASEYYE) traverse the membrane as a helical segment. Residues 184–190 (TPFTISD) lie on the Mitochondrial intermembrane side of the membrane. Residues 191–223 (GIYGSTFFMATGFHGLHVIIGSTFLIVCFMRQL) form a helical membrane-spanning segment. The Mitochondrial matrix segment spans residues 224–232 (KFHFTSNHH). A helical membrane pass occupies residues 233–256 (FGFEAAAWYWHFVDVVWLFLYVSI). The Mitochondrial intermembrane segment spans residues 257–261 (YWWGS).

The protein belongs to the cytochrome c oxidase subunit 3 family. As to quaternary structure, component of the cytochrome c oxidase (complex IV, CIV), a multisubunit enzyme composed of 14 subunits. The complex is composed of a catalytic core of 3 subunits MT-CO1, MT-CO2 and MT-CO3, encoded in the mitochondrial DNA, and 11 supernumerary subunits COX4I, COX5A, COX5B, COX6A, COX6B, COX6C, COX7A, COX7B, COX7C, COX8 and NDUFA4, which are encoded in the nuclear genome. The complex exists as a monomer or a dimer and forms supercomplexes (SCs) in the inner mitochondrial membrane with NADH-ubiquinone oxidoreductase (complex I, CI) and ubiquinol-cytochrome c oxidoreductase (cytochrome b-c1 complex, complex III, CIII), resulting in different assemblies (supercomplex SCI(1)III(2)IV(1) and megacomplex MCI(2)III(2)IV(2)).

Its subcellular location is the mitochondrion inner membrane. The catalysed reaction is 4 Fe(II)-[cytochrome c] + O2 + 8 H(+)(in) = 4 Fe(III)-[cytochrome c] + 2 H2O + 4 H(+)(out). Component of the cytochrome c oxidase, the last enzyme in the mitochondrial electron transport chain which drives oxidative phosphorylation. The respiratory chain contains 3 multisubunit complexes succinate dehydrogenase (complex II, CII), ubiquinol-cytochrome c oxidoreductase (cytochrome b-c1 complex, complex III, CIII) and cytochrome c oxidase (complex IV, CIV), that cooperate to transfer electrons derived from NADH and succinate to molecular oxygen, creating an electrochemical gradient over the inner membrane that drives transmembrane transport and the ATP synthase. Cytochrome c oxidase is the component of the respiratory chain that catalyzes the reduction of oxygen to water. Electrons originating from reduced cytochrome c in the intermembrane space (IMS) are transferred via the dinuclear copper A center (CU(A)) of subunit 2 and heme A of subunit 1 to the active site in subunit 1, a binuclear center (BNC) formed by heme A3 and copper B (CU(B)). The BNC reduces molecular oxygen to 2 water molecules using 4 electrons from cytochrome c in the IMS and 4 protons from the mitochondrial matrix. This is Cytochrome c oxidase subunit 3 (MT-CO3) from Halichoerus grypus (Gray seal).